A 539-amino-acid chain; its full sequence is Membrane protein insertase YidC (539 aa).

Residues 6–26 (VILAVALSFAVLLGWQFLFPP) traverse the membrane as a helical segment. The tract at residues 28–63 (PQQPAPAQQEQTAQPNQAVDSSVAGPVSNQLPDPAS) is disordered. The segment covering 32–45 (APAQQEQTAQPNQA) has biased composition (low complexity). A compositionally biased stretch (polar residues) spans 54–63 (VSNQLPDPAS). 3 helical membrane passes run 349–369 (YGIAIILLTIVIKILFWPLSH), 421–441 (MLLQIPVFFGLYKALMGTVAL), and 496–516 (IMMFLPLVFTFMFLNFPSGLV).

It belongs to the OXA1/ALB3/YidC family. Type 1 subfamily. In terms of assembly, interacts with the Sec translocase complex via SecD. Specifically interacts with transmembrane segments of nascent integral membrane proteins during membrane integration.

It is found in the cell inner membrane. Functionally, required for the insertion and/or proper folding and/or complex formation of integral membrane proteins into the membrane. Involved in integration of membrane proteins that insert both dependently and independently of the Sec translocase complex, as well as at least some lipoproteins. Aids folding of multispanning membrane proteins. This Maridesulfovibrio salexigens (strain ATCC 14822 / DSM 2638 / NCIMB 8403 / VKM B-1763) (Desulfovibrio salexigens) protein is Membrane protein insertase YidC.